The sequence spans 449 residues: Nuclear hormone receptor family member nhr-43 (449 aa).

A DNA-binding region (nuclear receptor) is located at residues Asn-44–Gly-122. 2 consecutive NR C4-type zinc fingers follow at residues Cys-47 to Cys-68 and Cys-84 to Cys-105. The span at Ser-125–Asp-142 shows a compositional bias: basic and acidic residues. The segment at Ser-125–Cys-154 is disordered. Residues Asn-200 to Ile-449 form the NR LBD domain.

The protein resides in the nucleus. Functionally, ligand-activated transcription factor. Positively modulates expression of homeobox protein lin-39, perhaps by binding to the sequence motif 5'-TGAC-3' in regulatory regions of the lin-39 gene, acting in the embryo, and also in the vulval lineage. The polypeptide is Nuclear hormone receptor family member nhr-43 (Caenorhabditis elegans).